A 624-amino-acid chain; its full sequence is Serine/threonine-protein kinase ppk35 (624 aa).

A Protein kinase domain is found at 162 to 465 (FDLLVKLGQG…TIEIQKHPFF (304 aa)). ATP contacts are provided by residues 168–176 (LGQGGYGSV) and K191. The Proton acceptor role is filled by D285. Positions 466–548 (KRLHWNGLRK…KYRPNARKPL (83 aa)) constitute an AGC-kinase C-terminal domain. Over residues 545-559 (RKPLVGRHREKRQLR) the composition is skewed to basic residues. The interval 545 to 617 (RKPLVGRHRE…VHRLLERKGK (73 aa)) is disordered. A compositionally biased stretch (basic and acidic residues) spans 560–574 (KEKPEKKNNSTKQKD). The span at 596-609 (SKTKGHKTKSSRVH) shows a compositional bias: basic residues.

This sequence belongs to the protein kinase superfamily. Ser/Thr protein kinase family.

Its subcellular location is the cytoplasm. It is found in the nucleus. It localises to the nucleolus. It catalyses the reaction L-seryl-[protein] + ATP = O-phospho-L-seryl-[protein] + ADP + H(+). It carries out the reaction L-threonyl-[protein] + ATP = O-phospho-L-threonyl-[protein] + ADP + H(+). Has a role in meiosis. In Schizosaccharomyces pombe (strain 972 / ATCC 24843) (Fission yeast), this protein is Serine/threonine-protein kinase ppk35 (ppk35).